The chain runs to 307 residues: Mitochondrial glycine transporter YMC1 (307 aa).

Solcar repeat units lie at residues 26–106 (VKDL…MKRF), 121–204 (PQYY…LIAN), and 218–305 (PAWK…AMRL). 6 helical membrane-spanning segments follow: residues 29–49 (LLAG…FDTT), 83–103 (LTPL…NEAM), 118–138 (LSLP…SFLA), 183–203 (TILR…ALIA), 223–243 (CIFG…LDVI), and 277–298 (FFKG…TFAT).

The protein belongs to the mitochondrial carrier (TC 2.A.29) family.

The protein resides in the mitochondrion inner membrane. Functionally, secondary mitochondrial glycine transporter required for the biosynthesis of heme at high glycine concentrations. Imports the precursor glycine into the mitochondrial matrix, where it is condensed with succinyl-CoA to produce 5-aminolevulinate (ALA), the first step of heme biosynthesis. The sequence is that of Mitochondrial glycine transporter YMC1 from Saccharomyces cerevisiae (strain ATCC 204508 / S288c) (Baker's yeast).